The sequence spans 431 residues: Protein PIN-LIKES 6 (431 aa).

Residues Met1 to Lys29 are Lumenal-facing. The chain crosses the membrane as a helical span at residues Ile30–Ser50. Residues Lys51 to Gly66 are Cytoplasmic-facing. Residues Leu67–Leu87 form a helical membrane-spanning segment. The Lumenal portion of the chain corresponds to Gln88–Trp93. Residues Trp94 to Val114 traverse the membrane as a helical segment. Over Ala115–Thr128 the chain is Cytoplasmic. Residues Ile129–Cys149 form a helical membrane-spanning segment. Topologically, residues Arg150–Tyr169 are lumenal. Residues Ile170 to Ala190 traverse the membrane as a helical segment. Residues Pro191–Gln268 lie on the Cytoplasmic side of the membrane. Residues Ile269 to Thr289 form a helical membrane-spanning segment. Residues Lys290–Ser306 are Lumenal-facing. The helical transmembrane segment at Cys307 to Ile327 threads the bilayer. Over Asn328 to Thr340 the chain is Cytoplasmic. Residues Ala341 to Val361 form a helical membrane-spanning segment. Residues Ala362–Arg376 lie on the Lumenal side of the membrane. A helical transmembrane segment spans residues Phe377–Leu397. At Arg398 to Ala406 the chain is on the cytoplasmic side. Residues Val407–Ile427 traverse the membrane as a helical segment. The Lumenal segment spans residues Asn428–Phe431.

Belongs to the auxin efflux carrier (TC 2.A.69.2) family. In terms of tissue distribution, expressed in seedlings, rosette and cauline leaves, stems and flowers.

Its subcellular location is the endoplasmic reticulum membrane. Involved in cellular auxin homeostasis by regulating auxin metabolism. Regulates intracellular auxin accumulation at the endoplasmic reticulum and thus auxin availability for nuclear auxin signaling. The protein is Protein PIN-LIKES 6 of Arabidopsis thaliana (Mouse-ear cress).